Reading from the N-terminus, the 365-residue chain is Uroporphyrinogen decarboxylase (365 aa).

Residues 27 to 31 (RQAGR), Asp77, Tyr154, Thr209, and His327 each bind substrate.

It belongs to the uroporphyrinogen decarboxylase family. Homodimer.

The protein localises to the cytoplasm. It carries out the reaction uroporphyrinogen III + 4 H(+) = coproporphyrinogen III + 4 CO2. The protein operates within porphyrin-containing compound metabolism; protoporphyrin-IX biosynthesis; coproporphyrinogen-III from 5-aminolevulinate: step 4/4. In terms of biological role, catalyzes the decarboxylation of four acetate groups of uroporphyrinogen-III to yield coproporphyrinogen-III. This Nitrosospira multiformis (strain ATCC 25196 / NCIMB 11849 / C 71) protein is Uroporphyrinogen decarboxylase.